A 194-amino-acid polypeptide reads, in one-letter code: MARYRGSRVKVIRRLGLLPGFTSKSSNKPQNNNKQLSQYGFHLQEKQKLRYNYGISEHELIKYVKSARRKRGNSGDKLLQLLEMRLDTLLYRTGFVPTVASARQLISHGHINVNGKKVDIPGFNCSISDKIVINKEILKSLNDKNNSFSTLNCSHLVLNELNNDLTITVTNLPDIQVLGYSINILLVLEYYSGK.

An S4 RNA-binding domain is found at 84 to 144; sequence MRLDTLLYRT…KEILKSLNDK (61 aa).

Belongs to the universal ribosomal protein uS4 family. As to quaternary structure, part of the 30S ribosomal subunit. Contacts protein S5. The interaction surface between S4 and S5 is involved in control of translational fidelity.

It localises to the plastid. The protein localises to the chloroplast. In terms of biological role, one of the primary rRNA binding proteins, it binds directly to 16S rRNA where it nucleates assembly of the body of the 30S subunit. Its function is as follows. With S5 and S12 plays an important role in translational accuracy. This chain is Small ribosomal subunit protein uS4c (rps4), found in Bigelowiella natans (Pedinomonas minutissima).